The chain runs to 113 residues: Dolichyl-diphosphooligosaccharide--protein glycosyltransferase subunit dad-1 (113 aa).

At 1 to 32 (MAAQVVPVLSKLFDDYQKTTSSKLKIIDAYMT) the chain is on the cytoplasmic side. A helical membrane pass occupies residues 33–53 (YILFTGIFQFIYCLLVGTFPF). Residues 54–55 (NS) are Lumenal-facing. The chain crosses the membrane as a helical span at residues 56–78 (FLSGFISTVTSFVLASCLRMQVN). At 79–92 (QENRSEFTAVSTER) the chain is on the cytoplasmic side. Residues 93-113 (AFADFIFANLILHLVVVNFLG) form a helical membrane-spanning segment.

This sequence belongs to the DAD/OST2 family. Component of the oligosaccharyltransferase (OST) complex.

It localises to the endoplasmic reticulum membrane. It participates in protein modification; protein glycosylation. In terms of biological role, subunit of the oligosaccharyl transferase (OST) complex that catalyzes the initial transfer of a defined glycan (Glc(3)Man(9)GlcNAc(2) in eukaryotes) from the lipid carrier dolichol-pyrophosphate to an asparagine residue within an Asn-X-Ser/Thr consensus motif in nascent polypeptide chains, the first step in protein N-glycosylation. N-glycosylation occurs cotranslationally and the complex associates with the Sec61 complex at the channel-forming translocon complex that mediates protein translocation across the endoplasmic reticulum (ER). All subunits are required for a maximal enzyme activity. Possesses cell death-inhibiting activity. Suppresses some programmed cell death in C.elegans. The chain is Dolichyl-diphosphooligosaccharide--protein glycosyltransferase subunit dad-1 from Caenorhabditis elegans.